The following is a 331-amino-acid chain: MELLCPAGNLPALKAAIENGADAVYIGLKDDTNARHFAGLNFTEKKLQEAVSFVHQHRRKLHIAINTFAHPDGYARWQRAVDMAAQLGADALILADLAMLEYAAERYPHIERHVSVQASATNEEAINFYHRHFDVARVVLPRVLSIHQVKQLARVTPVPLEVFAFGSLCIMSEGRCYLSSYLTGESPNTIGACSPARFVRWQQTPQGLESRLNEVLIDRYQDGENAGYPTLCKGRYLVDGERYHALEEPTSLNTLELLPELMAANIASVKIEGRQRSPAYVSQVAKVWRQAIDRCKADPQNFVPQSAWMETLGSMSEGTQTTLGAYHRKWQ.

Residues Cys-169, Cys-176, Cys-193, and Cys-232 each contribute to the [4Fe-4S] cluster site.

It belongs to the peptidase U32 family. UbiU subfamily. In terms of assembly, forms a heterodimer with UbiV. It depends on [4Fe-4S] cluster as a cofactor.

It functions in the pathway cofactor biosynthesis; ubiquinone biosynthesis. Functionally, required for O(2)-independent ubiquinone (coenzyme Q) biosynthesis. Together with UbiV, is essential for the C6-hydroxylation reaction in the oxygen-independent ubiquinone biosynthesis pathway. This is Ubiquinone biosynthesis protein UbiU from Escherichia coli (strain K12).